Consider the following 1007-residue polypeptide: Ephrin type-A receptor 10 (1007 aa).

The first 22 residues, Met-1–Ala-22, serve as a signal peptide directing secretion. Over Leu-23 to Ala-565 the chain is Extracellular. The region spanning Glu-35–Arg-216 is the Eph LBD domain. An N-linked (GlcNAc...) asparagine glycan is attached at Asn-311. Disordered stretches follow at residues Ala-323 to Asp-343 and Pro-467 to Asn-486. 2 Fibronectin type-III domains span residues Ala-340–Gly-452 and Glu-456–Glu-554. Residue Asn-486 is glycosylated (N-linked (GlcNAc...) asparagine). Residues Val-566 to Leu-586 traverse the membrane as a helical segment. Residues Ala-587–Val-1007 lie on the Cytoplasmic side of the membrane. The Protein kinase domain occupies Val-644–Leu-899. Positions Pro-932 to Arg-996 constitute an SAM domain.

The protein belongs to the protein kinase superfamily. Tyr protein kinase family. Ephrin receptor subfamily. As to expression, expressed in the cochlea, in the organ of Corti, spiral ganglion, and stria vascularis.

It localises to the cell membrane. The catalysed reaction is L-tyrosyl-[protein] + ATP = O-phospho-L-tyrosyl-[protein] + ADP + H(+). Functionally, receptor for members of the ephrin-A family. Binds to EFNA3, EFNA4 and EFNA5. The protein is Ephrin type-A receptor 10 (Epha10) of Mus musculus (Mouse).